A 206-amino-acid polypeptide reads, in one-letter code: MSVCLAVTKTVAVSSLGIYCGMLTSACVASYAAPVDVLTQLAKPARVIARVGGALAAVSSAFFALSYFGAPAHWRHPYLLYGMLVAPVSAAYVAVVARVRGAHCRRACEKRRAQSASVHASTPASAAPEPALDDSVVDLGAAAAAAESAPETHVTSAEHVPVSHHVTPASAACARAAARHAAVLLLPAAAGLLGSVLGLYGEGLFV.

4 helical membrane passes run 13 to 35 (VSSLGIYCGMLTSACVASYAAPV), 51 to 71 (VGGALAAVSSAFFALSYFGAP), 77 to 97 (PYLLYGMLVAPVSAAYVAVVA), and 181 to 201 (AAVLLLPAAAGLLGSVLGLYG).

The protein belongs to the ATG33 family.

The protein localises to the mitochondrion membrane. Its function is as follows. Involved in the selective degradation of mitochondria via autophagy during starvation and at post-log phase. This is Autophagy-related protein 33 (ATG33) from Lachancea thermotolerans (strain ATCC 56472 / CBS 6340 / NRRL Y-8284) (Yeast).